The following is a 116-amino-acid chain: Large ribosomal subunit protein uL18 (116 aa).

Belongs to the universal ribosomal protein uL18 family. In terms of assembly, part of the 50S ribosomal subunit; part of the 5S rRNA/L5/L18/L25 subcomplex. Contacts the 5S and 23S rRNAs.

Functionally, this is one of the proteins that bind and probably mediate the attachment of the 5S RNA into the large ribosomal subunit, where it forms part of the central protuberance. This is Large ribosomal subunit protein uL18 from Marinomonas sp. (strain MWYL1).